Reading from the N-terminus, the 263-residue chain is MPEGPEIRRAADNLEAAIKGKPLTDVWFAFPQLKTYQSQLIGQHVTHVETRGKALLTHFSNDLTLYSHNQLYGVWRVVDTGEEPQTTRVLRVKLQTADKTILLYSASDIEMLRPEQLTTHPFLQRVGPDVLDPNLTPEVVKERLLSPRFRNRQFAGLLLDQAFLAGLGNYLRVEILWQVGLTGNHKAKDLNAAQLDALAHALLEIPRFSYATRGQVDENKHHGALFRFKVFHRDGEPCERCGSIIEKTTLSSRPFYWCPGCQH.

The active-site Schiff-base intermediate with DNA is Pro-2. Catalysis depends on Glu-3, which acts as the Proton donor. Lys-53 serves as the catalytic Proton donor; for beta-elimination activity. The DNA site is built by Gln-70, Arg-125, and Asn-169. An FPG-type zinc finger spans residues 229–263; the sequence is KVFHRDGEPCERCGSIIEKTTLSSRPFYWCPGCQH. Arg-253 acts as the Proton donor; for delta-elimination activity in catalysis.

The protein belongs to the FPG family. Zn(2+) serves as cofactor.

It carries out the reaction 2'-deoxyribonucleotide-(2'-deoxyribose 5'-phosphate)-2'-deoxyribonucleotide-DNA = a 3'-end 2'-deoxyribonucleotide-(2,3-dehydro-2,3-deoxyribose 5'-phosphate)-DNA + a 5'-end 5'-phospho-2'-deoxyribonucleoside-DNA + H(+). In terms of biological role, involved in base excision repair of DNA damaged by oxidation or by mutagenic agents. Acts as a DNA glycosylase that recognizes and removes damaged bases. Has a preference for oxidized pyrimidines, such as thymine glycol, 5,6-dihydrouracil and 5,6-dihydrothymine. Has AP (apurinic/apyrimidinic) lyase activity and introduces nicks in the DNA strand. Cleaves the DNA backbone by beta-delta elimination to generate a single-strand break at the site of the removed base with both 3'- and 5'-phosphates. In Escherichia coli O9:H4 (strain HS), this protein is Endonuclease 8.